The following is a 577-amino-acid chain: Arginine--tRNA ligase (577 aa).

The 'HIGH' region motif lies at 122–132 (PNVAKEMHVGH).

This sequence belongs to the class-I aminoacyl-tRNA synthetase family. Monomer.

Its subcellular location is the cytoplasm. It carries out the reaction tRNA(Arg) + L-arginine + ATP = L-arginyl-tRNA(Arg) + AMP + diphosphate. The sequence is that of Arginine--tRNA ligase from Salmonella arizonae (strain ATCC BAA-731 / CDC346-86 / RSK2980).